We begin with the raw amino-acid sequence, 359 residues long: Putative transposase y4uE (359 aa).

Disordered stretches follow at residues 1–31 (MGDG…APGG) and 318–359 (HYAH…EEAA).

This sequence belongs to the transposase 9 family.

In Sinorhizobium fredii (strain NBRC 101917 / NGR234), this protein is Putative transposase y4uE.